A 363-amino-acid chain; its full sequence is NADH-quinone oxidoreductase subunit H (363 aa).

The next 10 helical transmembrane spans lie at 29 to 49, 62 to 82, 96 to 116, 127 to 147, 163 to 183, 202 to 222, 238 to 257, 264 to 286, 299 to 319, and 339 to 359; these read VLKI…YVVW, GPMY…KLLF, FVIA…VVPF, VGLL…ILAG, AAQV…VMIA, FFDW…VSGV, EIVA…LFFL, ILVS…QGWV, KGGW…YIWF, and FIPL…YGVI.

The protein belongs to the complex I subunit 1 family. NDH-1 is composed of 14 different subunits. Subunits NuoA, H, J, K, L, M, N constitute the membrane sector of the complex.

The protein resides in the cell inner membrane. It carries out the reaction a quinone + NADH + 5 H(+)(in) = a quinol + NAD(+) + 4 H(+)(out). NDH-1 shuttles electrons from NADH, via FMN and iron-sulfur (Fe-S) centers, to quinones in the respiratory chain. The immediate electron acceptor for the enzyme in this species is believed to be ubiquinone. Couples the redox reaction to proton translocation (for every two electrons transferred, four hydrogen ions are translocated across the cytoplasmic membrane), and thus conserves the redox energy in a proton gradient. This subunit may bind ubiquinone. The polypeptide is NADH-quinone oxidoreductase subunit H (Xanthomonas euvesicatoria pv. vesicatoria (strain 85-10) (Xanthomonas campestris pv. vesicatoria)).